A 425-amino-acid polypeptide reads, in one-letter code: MLDIKWIREYPEKLDEALAKRGIEPQAERLIKLDLERRSHVAKVQSAQERRNAASKEIGQALAACDQTMAEHLRAEVEEIKVFLSSATTEEKRLTENFERALSTLPNIPLDDVSVGKDGSDNVVIRHFGTPAMFDFTPKEHFDLGQNLKQMDFERASRLSGTRFTVLSGALARLERALGQFMLDVHVDEHGYTEVSVPLLVRDEIVYGAAQLPKFADDLFRTTDGRWLISTAEVPLTNLVNNEILEISDLPLRFSSLTPCFRSEAGSAGRDTRGMLRQHQFWKVEMVSITTEEQSLMELERMTECAEDVLKRLGLPFRTVVLSTGDMGFAARKTYDIEVWLPGQGCYREISSCSVCGDFQGRRMNARYRKEGDKTLKFVHSLNGSGTAVGRCLIAILENYQQADGSIIIPDVLQPYVKGMRCITA.

Residue 231-233 participates in L-serine binding; it reads TAE. 262-264 serves as a coordination point for ATP; it reads RSE. Glu285 contacts L-serine. 349 to 352 is an ATP binding site; that stretch reads EISS. Residue Ser385 coordinates L-serine.

It belongs to the class-II aminoacyl-tRNA synthetase family. Type-1 seryl-tRNA synthetase subfamily. As to quaternary structure, homodimer. The tRNA molecule binds across the dimer.

The protein resides in the cytoplasm. It catalyses the reaction tRNA(Ser) + L-serine + ATP = L-seryl-tRNA(Ser) + AMP + diphosphate + H(+). The enzyme catalyses tRNA(Sec) + L-serine + ATP = L-seryl-tRNA(Sec) + AMP + diphosphate + H(+). The protein operates within aminoacyl-tRNA biosynthesis; selenocysteinyl-tRNA(Sec) biosynthesis; L-seryl-tRNA(Sec) from L-serine and tRNA(Sec): step 1/1. Functionally, catalyzes the attachment of serine to tRNA(Ser). Is also able to aminoacylate tRNA(Sec) with serine, to form the misacylated tRNA L-seryl-tRNA(Sec), which will be further converted into selenocysteinyl-tRNA(Sec). This is Serine--tRNA ligase from Bartonella quintana (strain Toulouse) (Rochalimaea quintana).